The primary structure comprises 321 residues: Phospho-N-acetylmuramoyl-pentapeptide-transferase (321 aa).

10 consecutive transmembrane segments (helical) span residues 1–21 (MIFV…PVLI), 50–70 (MGGL…IIFV), 76–96 (IILL…DDYI), 112–132 (FLAQ…FHLV), 140–160 (IPFT…IVFW), 176–196 (GLAT…SFVL), 200–220 (AIGI…PYNI), 225–245 (VFMG…ISIM), 250–270 (LSLI…MLQV), and 300–320 (VVTV…WIGV).

Belongs to the glycosyltransferase 4 family. MraY subfamily. The cofactor is Mg(2+).

Its subcellular location is the cell membrane. It carries out the reaction UDP-N-acetyl-alpha-D-muramoyl-L-alanyl-gamma-D-glutamyl-L-lysyl-D-alanyl-D-alanine + di-trans,octa-cis-undecaprenyl phosphate = Mur2Ac(oyl-L-Ala-gamma-D-Glu-L-Lys-D-Ala-D-Ala)-di-trans,octa-cis-undecaprenyl diphosphate + UMP. It participates in cell wall biogenesis; peptidoglycan biosynthesis. Functionally, catalyzes the initial step of the lipid cycle reactions in the biosynthesis of the cell wall peptidoglycan: transfers peptidoglycan precursor phospho-MurNAc-pentapeptide from UDP-MurNAc-pentapeptide onto the lipid carrier undecaprenyl phosphate, yielding undecaprenyl-pyrophosphoryl-MurNAc-pentapeptide, known as lipid I. This Staphylococcus aureus (strain Mu50 / ATCC 700699) protein is Phospho-N-acetylmuramoyl-pentapeptide-transferase.